We begin with the raw amino-acid sequence, 306 residues long: UDP-N-acetylenolpyruvoylglucosamine reductase (306 aa).

One can recognise an FAD-binding PCMH-type domain in the interval 30-216; sequence RIGGPVPYIL…KSKLIDFSTR (187 aa). The active site involves Arg180. The active-site Proton donor is the Ser230. Glu301 is an active-site residue.

It belongs to the MurB family. FAD is required as a cofactor.

It localises to the cytoplasm. It carries out the reaction UDP-N-acetyl-alpha-D-muramate + NADP(+) = UDP-N-acetyl-3-O-(1-carboxyvinyl)-alpha-D-glucosamine + NADPH + H(+). The protein operates within cell wall biogenesis; peptidoglycan biosynthesis. Cell wall formation. This chain is UDP-N-acetylenolpyruvoylglucosamine reductase, found in Petrotoga mobilis (strain DSM 10674 / SJ95).